Reading from the N-terminus, the 89-residue chain is Cell division topological specificity factor (89 aa).

This sequence belongs to the MinE family.

Functionally, prevents the cell division inhibition by proteins MinC and MinD at internal division sites while permitting inhibition at polar sites. This ensures cell division at the proper site by restricting the formation of a division septum at the midpoint of the long axis of the cell. This is Cell division topological specificity factor from Laribacter hongkongensis (strain HLHK9).